The primary structure comprises 213 residues: Redox-sensing transcriptional repressor Rex (213 aa).

A DNA-binding region (H-T-H motif) is located at residues 17 to 56; it reads LYYRIFKRFHSENIEKASSKQIAEAIGIDSATVRRDFSYF. 91-96 lines the NAD(+) pocket; sequence GVGNIG.

Belongs to the transcriptional regulatory Rex family. Homodimer.

It localises to the cytoplasm. Modulates transcription in response to changes in cellular NADH/NAD(+) redox state. The protein is Redox-sensing transcriptional repressor Rex of Streptococcus mutans serotype c (strain ATCC 700610 / UA159).